The primary structure comprises 277 residues: Formamidopyrimidine-DNA glycosylase (277 aa).

Pro-2 (schiff-base intermediate with DNA) is an active-site residue. The Proton donor role is filled by Glu-3. The Proton donor; for beta-elimination activity role is filled by Lys-58. DNA contacts are provided by His-94, Arg-113, and Arg-156. The FPG-type zinc-finger motif lies at 241–277 (LVYGREGVPCPNCGAEHPIQRITQAGRSTFFCPTCQK). The active-site Proton donor; for delta-elimination activity is the Arg-267.

It belongs to the FPG family. As to quaternary structure, monomer. Zn(2+) serves as cofactor.

It catalyses the reaction Hydrolysis of DNA containing ring-opened 7-methylguanine residues, releasing 2,6-diamino-4-hydroxy-5-(N-methyl)formamidopyrimidine.. The enzyme catalyses 2'-deoxyribonucleotide-(2'-deoxyribose 5'-phosphate)-2'-deoxyribonucleotide-DNA = a 3'-end 2'-deoxyribonucleotide-(2,3-dehydro-2,3-deoxyribose 5'-phosphate)-DNA + a 5'-end 5'-phospho-2'-deoxyribonucleoside-DNA + H(+). Its function is as follows. Involved in base excision repair of DNA damaged by oxidation or by mutagenic agents. Acts as a DNA glycosylase that recognizes and removes damaged bases. Has a preference for oxidized purines, such as 7,8-dihydro-8-oxoguanine (8-oxoG). Has AP (apurinic/apyrimidinic) lyase activity and introduces nicks in the DNA strand. Cleaves the DNA backbone by beta-delta elimination to generate a single-strand break at the site of the removed base with both 3'- and 5'-phosphates. In Gluconobacter oxydans (strain 621H) (Gluconobacter suboxydans), this protein is Formamidopyrimidine-DNA glycosylase.